Consider the following 135-residue polypeptide: Small ribosomal subunit protein uS12 (135 aa).

3-methylthioaspartic acid is present on Asp-89. The disordered stretch occupies residues 103–135 (DTAGVKNRMQSRSKYGTKRPKPGQAAAPAGKKR). The segment covering 111-123 (MQSRSKYGTKRPK) has biased composition (basic residues). Over residues 124-135 (PGQAAAPAGKKR) the composition is skewed to low complexity.

Belongs to the universal ribosomal protein uS12 family. Part of the 30S ribosomal subunit. Contacts proteins S8 and S17. May interact with IF1 in the 30S initiation complex.

Functionally, with S4 and S5 plays an important role in translational accuracy. Interacts with and stabilizes bases of the 16S rRNA that are involved in tRNA selection in the A site and with the mRNA backbone. Located at the interface of the 30S and 50S subunits, it traverses the body of the 30S subunit contacting proteins on the other side and probably holding the rRNA structure together. The combined cluster of proteins S8, S12 and S17 appears to hold together the shoulder and platform of the 30S subunit. The sequence is that of Small ribosomal subunit protein uS12 from Gloeobacter violaceus (strain ATCC 29082 / PCC 7421).